A 640-amino-acid chain; its full sequence is PAN2-PAN3 deadenylation complex subunit PAN3 (640 aa).

The C3H1-type zinc finger occupies 17-46 (ENKDILCRNVLIYGHCRYEDQGCTYNHDQN). Composition is skewed to polar residues over residues 43-53 (HDQNKNSSQPE) and 63-87 (DSPS…SQAA). Residues 43–101 (HDQNKNSSQPEAPSKKMFNVDSPSFTPSGQSTVLPKKTTLSSQAASAAPFTPRGGGTPT) form a disordered region. Residues 237–498 (QVIPNSGLPQ…TIEHFMTGIA (262 aa)) form a pseudokinase domain region. Residues N263, R288, 338-345 (DFHPLSKT), and 397-398 (SK) each bind ATP. Residues 499–537 (SQMTTFFDLALQDNDEKLFHLAREVENGRIARSLMKLLT) are a coiled coil. The knob domain stretch occupies residues 538–640 (ILERGDYDGV…SKTGAPGANT (103 aa)).

The protein belongs to the protein kinase superfamily. PAN3 family. In terms of assembly, homodimer. Forms a heterotrimer with a catalytic subunit PAN2 to form the poly(A)-nuclease (PAN) deadenylation complex. Interacts (via PAM-2 motif) with poly(A)-binding protein PAB1 (via PABC domain), conferring substrate specificity of the enzyme complex.

The protein localises to the cytoplasm. Its function is as follows. Regulatory subunit of the poly(A)-nuclease (PAN) deadenylation complex, one of two cytoplasmic mRNA deadenylases involved in mRNA turnover. PAN specifically shortens poly(A) tails of RNA and the activity is stimulated by poly(A)-binding protein PAB1. PAN deadenylation is followed by rapid degradation of the shortened mRNA tails by the CCR4-NOT complex. Deadenylated mRNAs are then degraded by two alternative mechanisms, namely exosome-mediated 3'-5' exonucleolytic degradation, or deadenylation-dependent mRNA decaping and subsequent 5'-3' exonucleolytic degradation by XRN1. May also be involved in post-transcriptional maturation of mRNA poly(A) tails. PAN3 acts as a positive regulator for PAN activity, recruiting the catalytic subunit PAN2 to mRNA via its interaction with RNA and with PAB1. The protein is PAN2-PAN3 deadenylation complex subunit PAN3 of Chaetomium thermophilum (strain DSM 1495 / CBS 144.50 / IMI 039719) (Thermochaetoides thermophila).